Consider the following 662-residue polypeptide: Translation factor GUF1, mitochondrial (662 aa).

The N-terminal 28 residues, 1 to 28, are a transit peptide targeting the mitochondrion; sequence MYIHSSRTVLARYGSRTPLLRPSVLGRY. The region spanning 62–244 is the tr-type G domain; that stretch reads ENYRNFSIVA…AIVDHIPAPD (183 aa). GTP-binding positions include 71–78, 137–141, and 191–194; these read AHVDHGKS, DTPGH, and NKID.

It belongs to the TRAFAC class translation factor GTPase superfamily. Classic translation factor GTPase family. LepA subfamily.

The protein resides in the mitochondrion inner membrane. It catalyses the reaction GTP + H2O = GDP + phosphate + H(+). Its function is as follows. Promotes mitochondrial protein synthesis. May act as a fidelity factor of the translation reaction, by catalyzing a one-codon backward translocation of tRNAs on improperly translocated ribosomes. Binds to mitochondrial ribosomes in a GTP-dependent manner. The protein is Translation factor GUF1, mitochondrial of Meyerozyma guilliermondii (strain ATCC 6260 / CBS 566 / DSM 6381 / JCM 1539 / NBRC 10279 / NRRL Y-324) (Yeast).